A 173-amino-acid chain; its full sequence is Co-chaperone protein HscB homolog (173 aa).

The region spanning asparagine 3–isoleucine 75 is the J domain.

Belongs to the HscB family. Interacts with HscA and stimulates its ATPase activity.

Its function is as follows. Co-chaperone involved in the maturation of iron-sulfur cluster-containing proteins. Seems to help targeting proteins to be folded toward HscA. In Haemophilus ducreyi (strain 35000HP / ATCC 700724), this protein is Co-chaperone protein HscB homolog.